Here is a 1482-residue protein sequence, read N- to C-terminus: Glutamate receptor ionotropic, NMDA 2B (1482 aa).

The signal sequence occupies residues Met-1–Ala-26. At Arg-27–Asp-557 the chain is on the extracellular side. N-linked (GlcNAc...) asparagine glycosylation occurs at Asn-74. A disulfide bond links Cys-86 and Cys-321. Zn(2+) contacts are provided by His-127 and Glu-284. Asn-341, Asn-348, Asn-444, and Asn-491 each carry an N-linked (GlcNAc...) asparagine glycan. 2 disulfide bridges follow: Cys-429–Cys-456 and Cys-436–Cys-457. Thr-514 and Arg-519 together coordinate L-glutamate. Asn-542 carries an N-linked (GlcNAc...) asparagine glycan. The chain crosses the membrane as a helical span at residues Val-558–Val-576. The Cytoplasmic portion of the chain corresponds to Phe-577–Gly-603. An intramembrane region (discontinuously helical) is located at residues Lys-604 to Pro-623. Positions Lys-604–Pro-623 are pore-forming. Topologically, residues Lys-624–Ile-630 are cytoplasmic. The chain crosses the membrane as a helical span at residues Met-631–Tyr-646. Residues Thr-647–Asn-817 are Extracellular-facing. Asn-688 is a glycosylation site (N-linked (GlcNAc...) asparagine). Residues Ser-690, Thr-691, and Asp-732 each coordinate L-glutamate. An intrachain disulfide couples Cys-746 to Cys-801. The chain crosses the membrane as a helical span at residues Met-818–Ile-837. At Cys-838 to Val-1482 the chain is on the cytoplasmic side. Phosphoserine is present on residues Ser-882, Ser-886, Ser-917, and Ser-920. Residues Tyr-962 and Tyr-1039 each carry the phosphotyrosine modification. Phosphoserine is present on residues Ser-1058, Ser-1061, and Ser-1064. 2 positions are modified to phosphotyrosine: Tyr-1109 and Tyr-1133. A Phosphoserine modification is found at Ser-1143. Tyr-1155 is modified (phosphotyrosine). The disordered stretch occupies residues Asp-1161–Pro-1194. 2 positions are modified to phosphoserine: Ser-1255 and Ser-1259. Positions Pro-1269 to Gln-1301 are disordered. The span at Val-1272–Lys-1289 shows a compositional bias: polar residues. Positions Ala-1290–Gln-1301 are enriched in basic residues. Residues Lys-1292–Tyr-1304 form an interaction with DAPK1 region. Ser-1303 carries the post-translational modification Phosphoserine. Tyr-1472 is modified (phosphotyrosine). The short motif at Ser-1480–Val-1482 is the PDZ-binding element.

It belongs to the glutamate-gated ion channel (TC 1.A.10.1) family. NR2B/GRIN2B subfamily. In terms of assembly, heterotetramer. Forms heterotetrameric channels composed of two GluN1/zeta subunits (GRIN1), and two identical GluN2/epsilon subunits (GRIN2A, GRIN2B, GRIN2C or GRIN2D) or GluN3 subunits (GRIN3A or GRIN3B) (in vitro). Can also form heterotetrameric channels that contain at least two GluN1 subunits and at least two different GluN2 subunits (or a combination of one GluN2 and one GluN3 subunits) (in vitro). In vivo, the subunit composition may depend on the expression levels of the different subunits. Found in a complex with GRIN1, GRIN3A and PPP2CB. Found in a complex with GRIN1 and GRIN3B. Interacts with MAGI3. Interacts with HIP1 and NETO1. Interacts with PDZ domains of PATJ, DLG3 and DLG4. Interacts with DAPK1. Found in a complex with GRIN1 and PRR7. Interacts with PRR7. Interacts with CAMK2A. Interacts with ARC; preventing ARC oligomerization. Interacts with TMEM25. Interacts (via the extreme C-terminus) with FRMPD2 (via the second PDZ domain); the interaction is direct and is likely to promote NMDAR-mediated neural signal transmission. Interacts with FAM81A; the interaction facilitates condensate formation via liquid-liquid phase separation. Phosphorylated on tyrosine residues. Phosphorylation at Ser-1303 by DAPK1 enhances synaptic NMDA receptor channel activity. As to expression, expressed in the hippocampus including the dentate gyrus (at protein level). Detected in adult olfactory bulb, brain cortex, hippocampus, striatum, thalamus, superior colliculus, with much lower levels in inferior colliculus, midbrain and cerebellum.

It localises to the cell membrane. It is found in the postsynaptic cell membrane. Its subcellular location is the late endosome. The protein localises to the lysosome. The protein resides in the cytoplasm. It localises to the cytoskeleton. It catalyses the reaction Ca(2+)(in) = Ca(2+)(out). The catalysed reaction is Na(+)(in) = Na(+)(out). The enzyme catalyses K(+)(in) = K(+)(out). Its activity is regulated as follows. NMDA glutamate receptor activity is inhibited by micromolar levels of zinc ions. NMDA glutamate receptor activity is inhibited by ifenprodil. Component of N-methyl-D-aspartate (NMDA) receptors (NMDARs) that function as heterotetrameric, ligand-gated cation channels with high calcium permeability and voltage-dependent block by Mg(2+). Participates in synaptic plasticity for learning and memory formation by contributing to the long-term depression (LTD) of hippocampus membrane currents. Channel activation requires binding of the neurotransmitter L-glutamate to the GluN2 subunit, glycine or D-serine binding to the GluN1 subunit, plus membrane depolarization to eliminate channel inhibition by Mg(2+). NMDARs mediate simultaneously the potasium efflux and the influx of calcium and sodium. Each GluN2 subunit confers differential attributes to channel properties, including activation, deactivation and desensitization kinetics, pH sensitivity, Ca2(+) permeability, and binding to allosteric modulators. In concert with DAPK1 at extrasynaptic sites, acts as a central mediator for stroke damage. Its phosphorylation at Ser-1303 by DAPK1 enhances synaptic NMDA receptor channel activity inducing injurious Ca2+ influx through them, resulting in an irreversible neuronal death. The protein is Glutamate receptor ionotropic, NMDA 2B of Rattus norvegicus (Rat).